Consider the following 190-residue polypeptide: Probable GTP-binding protein EngB (190 aa).

An EngB-type G domain is found at 22 to 190 (VKREVAFAGR…LNELLKILIP (169 aa)). Residues 30–37 (GRSNVGKS), 56–60 (GKTRS), 74–77 (DLPG), 141–144 (TKTD), and 173–175 (FSA) each bind GTP. Residues Ser-37 and Thr-58 each coordinate Mg(2+).

The protein belongs to the TRAFAC class TrmE-Era-EngA-EngB-Septin-like GTPase superfamily. EngB GTPase family. The cofactor is Mg(2+).

Necessary for normal cell division and for the maintenance of normal septation. The sequence is that of Probable GTP-binding protein EngB from Kosmotoga olearia (strain ATCC BAA-1733 / DSM 21960 / TBF 19.5.1).